We begin with the raw amino-acid sequence, 276 residues long: Large ribosomal subunit protein uL2 (276 aa).

The disordered stretch occupies residues 221–276; sequence RGSAMNPNDHPHGGGEGRAPIGRKSPMTPWGKKARGVKTRDRKKASNALIIRRRTK. The span at 252 to 276 shows a compositional bias: basic residues; it reads KKARGVKTRDRKKASNALIIRRRTK.

This sequence belongs to the universal ribosomal protein uL2 family. Part of the 50S ribosomal subunit. Forms a bridge to the 30S subunit in the 70S ribosome.

Its function is as follows. One of the primary rRNA binding proteins. Required for association of the 30S and 50S subunits to form the 70S ribosome, for tRNA binding and peptide bond formation. It has been suggested to have peptidyltransferase activity; this is somewhat controversial. Makes several contacts with the 16S rRNA in the 70S ribosome. The sequence is that of Large ribosomal subunit protein uL2 from Onion yellows phytoplasma (strain OY-M).